The following is a 177-amino-acid chain: Ribulose bisphosphate carboxylase small subunit, chloroplastic 2 (177 aa).

The N-terminal 56 residues, 1–56 (MASSMMASTAAVARAGPAQSNMVAPFNGLRSSVAFPATRKANKNLSTLPSNGGKVS), are a transit peptide targeting the chloroplast.

Belongs to the RuBisCO small chain family. In terms of assembly, heterohexadecamer of 8 large and 8 small subunits.

It is found in the plastid. The protein resides in the chloroplast. In terms of biological role, ruBisCO catalyzes two reactions: the carboxylation of D-ribulose 1,5-bisphosphate, the primary event in carbon dioxide fixation, as well as the oxidative fragmentation of the pentose substrate. Both reactions occur simultaneously and in competition at the same active site. Although the small subunit is not catalytic it is essential for maximal activity. The polypeptide is Ribulose bisphosphate carboxylase small subunit, chloroplastic 2 (Lemna gibba (Swollen duckweed)).